The primary structure comprises 361 residues: Phosphoserine aminotransferase (361 aa).

An L-glutamate-binding site is contributed by Arg-42. Residues 76-77, Trp-102, Thr-153, Asp-173, and Gln-196 contribute to the pyridoxal 5'-phosphate site; that span reads AR. At Lys-197 the chain carries N6-(pyridoxal phosphate)lysine. 238 to 239 provides a ligand contact to pyridoxal 5'-phosphate; it reads NT.

The protein belongs to the class-V pyridoxal-phosphate-dependent aminotransferase family. SerC subfamily. As to quaternary structure, homodimer. It depends on pyridoxal 5'-phosphate as a cofactor.

The protein localises to the cytoplasm. It carries out the reaction O-phospho-L-serine + 2-oxoglutarate = 3-phosphooxypyruvate + L-glutamate. It catalyses the reaction 4-(phosphooxy)-L-threonine + 2-oxoglutarate = (R)-3-hydroxy-2-oxo-4-phosphooxybutanoate + L-glutamate. It functions in the pathway amino-acid biosynthesis; L-serine biosynthesis; L-serine from 3-phospho-D-glycerate: step 2/3. It participates in cofactor biosynthesis; pyridoxine 5'-phosphate biosynthesis; pyridoxine 5'-phosphate from D-erythrose 4-phosphate: step 3/5. Catalyzes the reversible conversion of 3-phosphohydroxypyruvate to phosphoserine and of 3-hydroxy-2-oxo-4-phosphonooxybutanoate to phosphohydroxythreonine. The sequence is that of Phosphoserine aminotransferase from Yersinia enterocolitica serotype O:8 / biotype 1B (strain NCTC 13174 / 8081).